Consider the following 59-residue polypeptide: MRQLKGKPKKETSKDKKERKQAMQEARQQITTVVLPTLAVVVALIVVFVYVATRPNTIE.

The disordered stretch occupies residues 1 to 23; sequence MRQLKGKPKKETSKDKKERKQAM. Residues 9–22 are compositionally biased toward basic and acidic residues; sequence KKETSKDKKERKQA. Residues 9–31 are a coiled coil; it reads KKETSKDKKERKQAMQEARQQIT. The chain crosses the membrane as a helical span at residues 32-52; the sequence is TVVLPTLAVVVALIVVFVYVA.

The protein belongs to the SMCO4 family.

Its subcellular location is the membrane. The polypeptide is Single-pass membrane and coiled-coil domain-containing protein 4 (smco4) (Xenopus laevis (African clawed frog)).